Reading from the N-terminus, the 606-residue chain is Leucine-rich repeat and immunoglobulin-like domain-containing nogo receptor-interacting protein 1 (606 aa).

The first 27 residues, 1 to 27 (MILQLPSCLCPILLIVVGSILSGSASG), serve as a signal peptide directing secretion. 2 disulfide bridges follow: C28–C34 and C32–C43. In terms of domain architecture, LRRNT spans 28 to 57 (CPQRCDCSPQDRSVLCHRKRYLDVPEGIPT). Topologically, residues 28-547 (CPQRCDCSPQ…FDIKTLIIAT (520 aa)) are extracellular. LRR repeat units lie at residues 58-79 (DTRL…EFSA), 82-103 (YLEE…AFNG), 106-127 (NLRS…VFTG), 130-151 (NLTQ…MFQD), 154-175 (NLKS…AFRG), 178-199 (SLEE…ALSH), 202-223 (GLIT…SFKR), 250-271 (NLTS…AIRH), 274-295 (YLRF…MLYE), 298-319 (RLQE…AFRG), and 322-343 (HLKV…SFHS). N130 carries an N-linked (GlcNAc...) asparagine glycan. N-linked (GlcNAc...) asparagine glycosylation is present at N188. N-linked (GlcNAc...) asparagine glycosylation is found at N250, N260, and N279. N-linked (GlcNAc...) asparagine glycosylation is found at N327, N374, N478, N491, N512, N523, and N528. Residues 355–409 (NPLACDCRLLWIFRRRWRLNFSRQQPSCSSPEYVQGKEFKDFPDVLQPNYFTCRR) form the LRRCT domain. 3 disulfide bridges follow: C359–C382, C361–C407, and C432–C483. Positions 397–496 (PDVLQPNYFT…NAGGNDTSLA (100 aa)) constitute an Ig-like C2-type domain. The chain crosses the membrane as a helical span at residues 548–568 (TMGFISFLGVVLFCLVLLFLW). Residues 569–606 (SRGKGNTKHNIEIEYVPRKSDAGLSSADAPRKFNMKMI) lie on the Cytoplasmic side of the membrane.

Its subcellular location is the cell membrane. Its function is as follows. May play a role in regulating axonal regeneration and plasticity in the adult central nervous system. This chain is Leucine-rich repeat and immunoglobulin-like domain-containing nogo receptor-interacting protein 1 (lingo1), found in Xenopus tropicalis (Western clawed frog).